The chain runs to 400 residues: Keratin, type I cytoskeletal 19 (400 aa).

Residues M1–N79 form a head region. Omega-N-methylarginine is present on R7. Phosphoserine is present on residues S14 and S22. Residue R24 is modified to Asymmetric dimethylarginine; alternate. Omega-N-methylarginine; alternate is present on R24. R32 carries the omega-N-methylarginine modification. 2 positions are modified to phosphoserine: S35 and S40. R43 and R51 each carry omega-N-methylarginine. S57 and S72 each carry phosphoserine. Residues E80–W115 form a coil 1A region. The region spanning E80–Y391 is the IF rod domain. The linker 1 stretch occupies residues Y116–T133. Residues I134–L225 form a coil 1B region. The segment at R226 to I248 is linker 12. Positions D244–H390 are necessary for interaction with PNN. A coil 2 region spans residues L249–Q387. The residue at position 323 (T323) is a Phosphothreonine. The interval E388 to L400 is rod-like helical tail. Y391 is modified (phosphotyrosine). Position 395 is a phosphoserine (S395).

This sequence belongs to the intermediate filament family. Heterotetramer of two type I and two type II keratins. Interacts with PNN and the actin-binding domain of DMD.

Involved in the organization of myofibers. Together with KRT8, helps to link the contractile apparatus to dystrophin at the costameres of striated muscle. This chain is Keratin, type I cytoskeletal 19, found in Pongo abelii (Sumatran orangutan).